A 1250-amino-acid polypeptide reads, in one-letter code: DNA excision repair protein ERCC-6-like (1250 aa).

Ser14 is modified (phosphoserine). The TPR 1 repeat unit spans residues 21 to 54 (YLRYVKEAKEATKNGDLEEAFKLFNLAKDIFPNE). Positions 109–277 (SLYRDGRKGG…WSLFDFACQG (169 aa)) constitute a Helicase ATP-binding domain. 122-129 (DDMGLGKT) is a binding site for ATP. The DEAH box signature appears at 228 to 231 (DEAH). The Helicase C-terminal domain occupies 464–620 (FLMDLLKRLR…EKKNPFRYFS (157 aa)). The interval 735-768 (VFPSSTKKKCPKLNKPQPQPSPLLSTHHTQEEDI) is disordered. Ser755, Ser774, Ser807, and Ser810 each carry phosphoserine. A Phosphothreonine modification is found at Thr813. Ser820 is subject to Phosphoserine. Positions 926–946 (SALQDAQASEAKLEEEPSASS) are disordered. Phosphoserine occurs at positions 969, 971, 995, 1004, and 1028. The interval 1061-1092 (ASTPKNDISPPGRFFSSQIPSSVNKSMNSRRS) is disordered. Thr1063 is subject to Phosphothreonine; by PLK1. At Ser1069 the chain carries Phosphoserine. The span at 1075–1087 (FSSQIPSSVNKSM) shows a compositional bias: polar residues. 2 positions are modified to phosphoserine: Ser1098 and Ser1118. Residues 1110-1199 (MEERLDDSSE…QDKAAEATND (90 aa)) form a disordered region. Residues 1115-1124 (DDSSEAKGPE) are compositionally biased toward basic and acidic residues. A compositionally biased stretch (acidic residues) spans 1125–1135 (DYPEEGVEESS). The segment covering 1149-1173 (ETLSSENKSSWLMTSKPSALAQETS) has biased composition (polar residues). Residues Ser1181 and Ser1188 each carry the phosphoserine modification. Residues 1200–1233 (YETLVKRGKELKECGKIQEALNCLVKALDIKSAD) form a TPR 2 repeat.

It belongs to the SNF2/RAD54 helicase family. As to quaternary structure, interacts with PLK1, which phosphorylates it. Both proteins are mutually dependent on each other for correct subcellular localization. Interacts (via N-terminal TPR repeat) with BEND3 (via BEN domains 1 and 3); the interaction is direct. Phosphorylation by PLK1 prevents the association with chromosome arms and restricts its localization to the kinetochore-centromere region.

The protein localises to the chromosome. It is found in the centromere. Its subcellular location is the kinetochore. The catalysed reaction is ATP + H2O = ADP + phosphate + H(+). In terms of biological role, DNA helicase that acts as a tension sensor that associates with catenated DNA which is stretched under tension until it is resolved during anaphase. Functions as ATP-dependent DNA translocase. Can promote Holliday junction branch migration (in vitro). The protein is DNA excision repair protein ERCC-6-like (ERCC6L) of Homo sapiens (Human).